A 648-amino-acid chain; its full sequence is RalA-binding protein 1 (648 aa).

A disordered region spans residues 1–158 (MTECFLPPSS…KKSKDLTAAD (158 aa)). Threonine 2 is modified (N-acetylthreonine). Positions 24–33 (LTRTPSSEEI) are enriched in polar residues. Phosphoserine occurs at positions 29, 30, and 34. Threonine 44 bears the Phosphothreonine mark. Serine 48 and serine 62 each carry phosphoserine. The span at 52–68 (DVLHEPPDTVSDDDKDH) shows a compositional bias: basic and acidic residues. Position 69–74 (69–74 (GKKKGK)) interacts with ATP. The span at 69–79 (GKKKGKFKKKE) shows a compositional bias: basic residues. Residues serine 92 and serine 93 each carry the phosphoserine modification. Residues 102 to 118 (KVKRSKGIHVFKKPSFS) show a composition bias toward basic residues. Residues 102 to 119 (KVKRSKGIHVFKKPSFSK) form a nuclear localization signal region. A compositionally biased stretch (basic and acidic residues) spans 119 to 155 (KKKEKDFKIKEKPKEEKHKEEKHKEEKHKEKKSKDLT). Residues 154-219 (LTAADVVKQW…PAVFRECVDY (66 aa)) form a mediates association with membranes and could form transmembrane domains region. The Rho-GAP domain occupies 192 to 380 (VPLVDAVERT…VVLKQVTRPL (189 aa)). The mediates interaction with RALA and RALB stretch occupies residues 403–499 (RRQEFLLNCL…LTEQEELLAM (97 aa)). 418–425 (GGIKDLSK) lines the ATP pocket. Residues serine 461 and serine 463 each carry the phosphoserine modification. The tract at residues 500-648 (EQFLRRQIAS…PSKDRKETPI (149 aa)) is mediates interaction with REPS1 and REPS2. Disordered regions lie at residues 525–552 (QSRQ…EEEL) and 598–648 (RAKS…ETPI). The span at 536–552 (EEYSSDSESESEDEEEL) shows a compositional bias: acidic residues. The segment covering 629–648 (RVAKEQAKASPSKDRKETPI) has biased composition (basic and acidic residues). The residue at position 638 (serine 638) is a Phosphoserine.

As to quaternary structure, interacts with the GTP-bound form of RALA (via effector domain); during mitosis, recruits RALBP1 to the mitochondrion where it promotes DNM1L phosphorylation and mitochondrial fission. Interacts with DNM1L; mediates its mitotic kinase cyclin B-CDK1-mediated phosphorylation during mitosis to promote mitochondrial fission. Interacts with the mitotic kinase cyclin B-CDK1 during mitosis. Interacts with the GTP-bound form of RALB (via effector domain). Interacts with REPS1; the interaction is direct and does not affect RALA-binding nor GTPase activator activity of RALBP1. Interacts with REPS2; the interaction is direct and does not affect RALA-binding nor GTPase activator activity of RALBP1. Interacts with EPN1, NUMB and TFAP2A during interphase and mitosis. Interacts with AP2M1; as part of the AP2 complex. Interacts with CDC42. Interacts with RAC1. In terms of processing, tyrosine-phosphorylated upon stimulation of cells with EGF. Post-translationally, may undergo proteolytic cleavage to give peptides which reassemble to form a transporter complex. As to expression, ubiquitous. The highest level of expression was observed in ovaries and skeletal muscle, whereas the lowest was found in spleen, liver and peripheral blood leukocytes.

The protein resides in the cell membrane. It is found in the cytoplasm. The protein localises to the cytosol. Its subcellular location is the cytoskeleton. It localises to the spindle pole. The protein resides in the nucleus. It is found in the mitochondrion. It carries out the reaction an S-substituted glutathione(in) + ATP + H2O = an S-substituted glutathione(out) + ADP + phosphate + H(+). The catalysed reaction is ATP + H2O + xenobioticSide 1 = ADP + phosphate + xenobioticSide 2.. The enzyme catalyses leukotriene C4(in) + ATP + H2O = leukotriene C4(out) + ADP + phosphate + H(+). Its function is as follows. Multifunctional protein that functions as a downstream effector of RALA and RALB. As a GTPase-activating protein/GAP can inactivate CDC42 and RAC1 by stimulating their GTPase activity. As part of the Ral signaling pathway, may also regulate ligand-dependent EGF and insulin receptors-mediated endocytosis. During mitosis, may act as a scaffold protein in the phosphorylation of EPSIN/EPN1 by the mitotic kinase cyclin B-CDK1, preventing endocytosis during that phase of the cell cycle. During mitosis, also controls mitochondrial fission as an effector of RALA. Recruited to mitochondrion by RALA, acts as a scaffold to foster the mitotic kinase cyclin B-CDK1-mediated phosphorylation and activation of DNM1L. Functionally, could also function as a primary ATP-dependent active transporter for glutathione conjugates of electrophiles. May also actively catalyze the efflux of a wide range of substrates including xenobiotics like doxorubicin (DOX) contributing to cell multidrug resistance. This is RalA-binding protein 1 from Mus musculus (Mouse).